A 62-amino-acid polypeptide reads, in one-letter code: Large ribosomal subunit protein bL28 (62 aa).

This sequence belongs to the bacterial ribosomal protein bL28 family.

This is Large ribosomal subunit protein bL28 from Ruminiclostridium cellulolyticum (strain ATCC 35319 / DSM 5812 / JCM 6584 / H10) (Clostridium cellulolyticum).